The chain runs to 192 residues: Elongation factor P (192 aa).

Positions 133–157 (EVTETTPGVKGDTAQGGDKPATLES) are disordered.

It belongs to the elongation factor P family.

It is found in the cytoplasm. The protein operates within protein biosynthesis; polypeptide chain elongation. Involved in peptide bond synthesis. Stimulates efficient translation and peptide-bond synthesis on native or reconstituted 70S ribosomes in vitro. Probably functions indirectly by altering the affinity of the ribosome for aminoacyl-tRNA, thus increasing their reactivity as acceptors for peptidyl transferase. This Salinibacter ruber (strain DSM 13855 / M31) protein is Elongation factor P.